A 182-amino-acid chain; its full sequence is Organic solute transporter subunit beta (182 aa).

The signal sequence occupies residues 1–20 (MSGLLKYLFGCFILCLLLQG). The Extracellular segment spans residues 21-64 (KTHMTSATISKPHETIDIEKQNMTGERNSTLAQQLSFPMEDPTN). 2 N-linked (GlcNAc...) asparagine glycosylation sites follow: Asn42 and Asn48. Residues 65–85 (WNYAILALAFVVLFLAFLILA) form a helical membrane-spanning segment. Over 86 to 182 (QNSRANRTRK…LYTDSKEDDV (97 aa)) the chain is Cytoplasmic.

This sequence belongs to the OST-beta family. In terms of assembly, interacts with slc51a. The Ost-alpha/Ost-beta complex is a heterodimer composed of alpha (slc51a) and beta (slc51b) subunit; may induce the transport of slc51a from the endoplasmic reticulum to the plasma membrane. In terms of tissue distribution, expressed in liver.

The protein resides in the cell membrane. Its function is as follows. Essential component of the Ost-alpha/Ost-beta complex, a heterodimer that acts as the intestinal basolateral transporter responsible for bile acid export from enterocytes into portal blood. Efficiently transports the major species of bile acids. May modulate slc51a glycosylation, membrane trafficking and stability activities. Able to transport taurocholate, estrone sulfate, digoxin, and prostaglandin E(2), but not p-aminohippurate or S-dinitrophenyl glutathione. The polypeptide is Organic solute transporter subunit beta (slc51b) (Leucoraja erinaceus (Little skate)).